The sequence spans 218 residues: Ribose-5-phosphate isomerase A (218 aa).

Substrate-binding positions include 27-30 (TGST), 80-83 (DGAD), and 93-96 (KGGG). Glutamate 102 (proton acceptor) is an active-site residue. Residue lysine 120 participates in substrate binding.

The protein belongs to the ribose 5-phosphate isomerase family. In terms of assembly, homodimer.

It carries out the reaction aldehydo-D-ribose 5-phosphate = D-ribulose 5-phosphate. It participates in carbohydrate degradation; pentose phosphate pathway; D-ribose 5-phosphate from D-ribulose 5-phosphate (non-oxidative stage): step 1/1. Its function is as follows. Catalyzes the reversible conversion of ribose-5-phosphate to ribulose 5-phosphate. This is Ribose-5-phosphate isomerase A from Picrophilus torridus (strain ATCC 700027 / DSM 9790 / JCM 10055 / NBRC 100828 / KAW 2/3).